We begin with the raw amino-acid sequence, 176 residues long: 3-hydroxydecanoyl-[acyl-carrier-protein] dehydratase (176 aa).

His71 is an active-site residue.

The protein belongs to the thioester dehydratase family. FabA subfamily. Homodimer.

The protein localises to the cytoplasm. The catalysed reaction is a (3R)-hydroxyacyl-[ACP] = a (2E)-enoyl-[ACP] + H2O. The enzyme catalyses (3R)-hydroxydecanoyl-[ACP] = (2E)-decenoyl-[ACP] + H2O. It catalyses the reaction (2E)-decenoyl-[ACP] = (3Z)-decenoyl-[ACP]. The protein operates within lipid metabolism; fatty acid biosynthesis. Functionally, necessary for the introduction of cis unsaturation into fatty acids. Catalyzes the dehydration of (3R)-3-hydroxydecanoyl-ACP to E-(2)-decenoyl-ACP and then its isomerization to Z-(3)-decenoyl-ACP. Can catalyze the dehydratase reaction for beta-hydroxyacyl-ACPs with saturated chain lengths up to 16:0, being most active on intermediate chain length. This chain is 3-hydroxydecanoyl-[acyl-carrier-protein] dehydratase, found in Rhodopseudomonas palustris (strain HaA2).